Consider the following 131-residue polypeptide: Fluoride-specific ion channel FluC (131 aa).

The next 3 membrane-spanning stretches (helical) occupy residues 3–23 (AAANLPAFLAVGAGAALGAWL), 34–54 (IFLTIPFGTLAANLLGGLLMG), and 62–82 (AVPAMSPVLKLLLTTGFLGGL). Gly80 and Thr83 together coordinate Na(+). The helical transmembrane segment at 101–121 (WGWLALHAAVHVAGSLLMAWI) threads the bilayer.

It belongs to the fluoride channel Fluc/FEX (TC 1.A.43) family.

It localises to the cell inner membrane. The enzyme catalyses fluoride(in) = fluoride(out). Its activity is regulated as follows. Na(+) is not transported, but it plays an essential structural role and its presence is essential for fluoride channel function. In terms of biological role, fluoride-specific ion channel. Important for reducing fluoride concentration in the cell, thus reducing its toxicity. This Aromatoleum aromaticum (strain DSM 19018 / LMG 30748 / EbN1) (Azoarcus sp. (strain EbN1)) protein is Fluoride-specific ion channel FluC.